We begin with the raw amino-acid sequence, 586 residues long: Arginine--tRNA ligase (586 aa).

The short motif at 128–138 (ANPTGPLHVGH) is the 'HIGH' region element.

It belongs to the class-I aminoacyl-tRNA synthetase family. In terms of assembly, monomer.

It localises to the cytoplasm. It catalyses the reaction tRNA(Arg) + L-arginine + ATP = L-arginyl-tRNA(Arg) + AMP + diphosphate. This Legionella pneumophila (strain Corby) protein is Arginine--tRNA ligase.